The sequence spans 126 residues: Phosphoribosyl-AMP cyclohydrolase (126 aa).

Aspartate 82 provides a ligand contact to Mg(2+). Cysteine 83 serves as a coordination point for Zn(2+). Aspartate 84 and aspartate 86 together coordinate Mg(2+). Zn(2+) contacts are provided by cysteine 99 and cysteine 106.

It belongs to the PRA-CH family. In terms of assembly, homodimer. Requires Mg(2+) as cofactor. It depends on Zn(2+) as a cofactor.

It is found in the cytoplasm. It catalyses the reaction 1-(5-phospho-beta-D-ribosyl)-5'-AMP + H2O = 1-(5-phospho-beta-D-ribosyl)-5-[(5-phospho-beta-D-ribosylamino)methylideneamino]imidazole-4-carboxamide. Its pathway is amino-acid biosynthesis; L-histidine biosynthesis; L-histidine from 5-phospho-alpha-D-ribose 1-diphosphate: step 3/9. Functionally, catalyzes the hydrolysis of the adenine ring of phosphoribosyl-AMP. The chain is Phosphoribosyl-AMP cyclohydrolase from Sphingopyxis alaskensis (strain DSM 13593 / LMG 18877 / RB2256) (Sphingomonas alaskensis).